The chain runs to 169 residues: MSSIYRTVSRKEKPRRHHGLTTQKKQEIKEAFELFDTDGSGTIDAKELNVAMRALGFEMTEEQINKMIADVDKDGSGAIDFDEFVHMMTAKIGERDTKEELTKAFQIIDLDKNGKISPDDIKRMAKDLGENFTDAEIREMVEEADRDRDGEVNMDEFMRMMRRTAYGGN.

A disordered region spans residues 1 to 23 (MSSIYRTVSRKEKPRRHHGLTTQ). EF-hand domains are found at residues 23 to 58 (QKKQ…LGFE), 59 to 94 (MTEE…KIGE), 96 to 131 (DTKE…LGEN), and 132 to 167 (FTDA…TAYG). 19 residues coordinate Ca(2+): Asp36, Asp38, Ser40, Thr42, Glu47, Asp72, Asp74, Ser76, Glu83, Asp109, Asp111, Asn113, Lys115, Asp120, Asp145, Asp147, Asp149, Glu151, and Glu156.

As to quaternary structure, interacts with TON1A and TON1B. Interacts with SAC3A and SAC3B. Interacts with UCH1 and UCH2.

In terms of biological role, potential calcium sensor. This Arabidopsis thaliana (Mouse-ear cress) protein is Probable calcium-binding protein CML20.